The chain runs to 475 residues: Ribulose bisphosphate carboxylase large chain (475 aa).

The propeptide occupies 1 to 2 (MS). At Pro-3 the chain carries N-acetylproline. Thr-65, Asn-123, and Thr-173 together coordinate substrate. The active-site Proton acceptor is Lys-175. Residue Lys-177 participates in substrate binding. Mg(2+)-binding residues include Lys-201, Asp-203, and Glu-204. N6-carboxylysine is present on Lys-201. Residues Glu-204, His-294, Arg-295, His-327, Lys-334, Ser-379, Gly-381, Gly-403, and Gly-404 each coordinate substrate. Catalysis depends on His-294, which acts as the Proton acceptor.

It belongs to the RuBisCO large chain family. Type I subfamily. In terms of assembly, heterohexadecamer of 8 large chains and 8 small chains. It depends on Mg(2+) as a cofactor. The disulfide bond which can form between Cys-247 in the large chain dimeric partners within the hexadecamer appears to be associated with oxidative stress and protein turnover. The disulfide bonds reported in 1RBO may be the result of oxidation during crystallization.

Its subcellular location is the plastid. The protein localises to the chloroplast. The catalysed reaction is 2 (2R)-3-phosphoglycerate + 2 H(+) = D-ribulose 1,5-bisphosphate + CO2 + H2O. The enzyme catalyses D-ribulose 1,5-bisphosphate + O2 = 2-phosphoglycolate + (2R)-3-phosphoglycerate + 2 H(+). Its activity is regulated as follows. Abscisic acid (ABA) causes weak inhibition of RuBisCO catalytic activity, but more potent inhibition of RuBisCO activation. Functionally, ruBisCO catalyzes two reactions: the carboxylation of D-ribulose 1,5-bisphosphate, the primary event in carbon dioxide fixation, as well as the oxidative fragmentation of the pentose substrate in the photorespiration process. Both reactions occur simultaneously and in competition at the same active site. Binds to abscisic acid (ABA) which has weakly inhibits carboxylation and more strongly inhibits enzyme activation. This is Ribulose bisphosphate carboxylase large chain from Spinacia oleracea (Spinach).